Consider the following 471-residue polypeptide: Putative multidrug resistance protein MdtD (471 aa).

Topologically, residues M1–Q11 are periplasmic. The helical transmembrane segment at L12–A32 threads the bilayer. Over L33–H48 the chain is Cytoplasmic. Residues M49 to A69 traverse the membrane as a helical segment. Residues D70–N76 are Periplasmic-facing. Residues I77–T97 traverse the membrane as a helical segment. Over L98–L101 the chain is Cytoplasmic. A helical membrane pass occupies residues L102–M124. Over K125–T137 the chain is Periplasmic. Residues F138 to V158 traverse the membrane as a helical segment. The Cytoplasmic segment spans residues E159–H164. Residues W165–M185 form a helical membrane-spanning segment. Residues P186 to D196 lie on the Periplasmic side of the membrane. Residues L197–S217 traverse the membrane as a helical segment. Topologically, residues K218–P224 are cytoplasmic. Residues L225–A245 traverse the membrane as a helical segment. Residues R246–T262 lie on the Periplasmic side of the membrane. A helical transmembrane segment spans residues F263–M283. Over T284–P285 the chain is Cytoplasmic. The helical transmembrane segment at V286–M306 threads the bilayer. Residues V307–T341 are Periplasmic-facing. A helical membrane pass occupies residues L342–L362. At Q363–S395 the chain is on the cytoplasmic side. A helical transmembrane segment spans residues M396–F416. Residues G417–T430 are Periplasmic-facing. The helical transmembrane segment at V431–A451 threads the bilayer. Over R452–Q471 the chain is Cytoplasmic.

The protein belongs to the major facilitator superfamily. TCR/Tet family.

The protein localises to the cell inner membrane. In Shigella boydii serotype 4 (strain Sb227), this protein is Putative multidrug resistance protein MdtD.